A 267-amino-acid polypeptide reads, in one-letter code: Oxidoreductase ordB (267 aa).

The protein belongs to the avfA family.

It functions in the pathway mycotoxin biosynthesis. Its function is as follows. Oxidoreductase; part of the fragmented gene cluster that mediates the biosynthesis of dothistromin (DOTH), a polyketide toxin very similar in structure to the aflatoxin precursor, versicolorin B. The first step of the pathway is the conversion of acetate to norsolorinic acid (NOR) and requires the fatty acid synthase subunits hexA and hexB, as well as the polyketide synthase pksA. PksA combines a hexanoyl starter unit and 7 malonyl-CoA extender units to synthesize the precursor NOR. The hexanoyl starter unit is provided to the acyl-carrier protein (ACP) domain by the fungal fatty acid synthase hexA/hexB. The second step is the conversion of NOR to averantin (AVN) and requires the norsolorinic acid ketoreductase nor1, which catalyzes the dehydration of norsolorinic acid to form (1'S)-averantin. The cytochrome P450 monooxygenase avnA then catalyzes the hydroxylation of AVN to 5'hydroxyaverantin (HAVN). The next step is performed by adhA that transforms HAVN to averufin (AVF). Averufin might then be converted to hydroxyversicolorone by cypX and avfA. Hydroxyversicolorone is further converted versiconal hemiacetal acetate (VHA) by moxY. VHA is then the substrate for the versiconal hemiacetal acetate esterase est1 to yield versiconal (VAL). Versicolorin B synthase vbsA then converts VAL to versicolorin B (VERB) by closing the bisfuran ring. Then, the activity of the versicolorin B desaturase verB leads to versicolorin A (VERA). DotB, a predicted chloroperoxidase, may perform epoxidation of the A-ring of VERA. Alternatively, a cytochrome P450, such as cypX or avnA could catalyze this step. It is also possible that another, uncharacterized, cytochrome P450 enzyme is responsible for this step. Opening of the epoxide could potentially be achieved by the epoxide hydrolase epoA. However, epoA seems not to be required for DOTH biosynthesis, but other epoxide hydrolases may have the ability to complement this hydrolysis. Alternatively, opening of the epoxide ring could be achieved non-enzymatically. The next step is the deoxygenation of ring A to yield the 5,8-dihydroxyanthraquinone which is most likely catalyzed by the NADPH dehydrogenase encoded by ver1. The last stages of DOTH biosynthesis are proposed to involve hydroxylation of the bisfuran. OrdB and norB might have oxidative roles here. An alternative possibility is that cytochrome P450 monoogenases such as avnA and cypX might perform these steps in addition to previously proposed steps. The sequence is that of Oxidoreductase ordB from Dothistroma septosporum (strain NZE10 / CBS 128990) (Red band needle blight fungus).